A 304-amino-acid chain; its full sequence is N-acetyl-D-glucosamine kinase (304 aa).

ATP contacts are provided by residues 4 to 11 and 133 to 140; these read GFDMGGTK and GLGGGLVI. Zn(2+) is bound by residues His-157, Cys-177, Cys-179, and Cys-184.

This sequence belongs to the ROK (NagC/XylR) family. NagK subfamily.

It carries out the reaction N-acetyl-D-glucosamine + ATP = N-acetyl-D-glucosamine 6-phosphate + ADP + H(+). It functions in the pathway cell wall biogenesis; peptidoglycan recycling. In terms of biological role, catalyzes the phosphorylation of N-acetyl-D-glucosamine (GlcNAc) derived from cell-wall degradation, yielding GlcNAc-6-P. The chain is N-acetyl-D-glucosamine kinase from Pectobacterium atrosepticum (strain SCRI 1043 / ATCC BAA-672) (Erwinia carotovora subsp. atroseptica).